Consider the following 218-residue polypeptide: GTP cyclohydrolase 1 (218 aa).

The Zn(2+) site is built by cysteine 109, histidine 112, and cysteine 180.

Belongs to the GTP cyclohydrolase I family. As to quaternary structure, toroid-shaped homodecamer, composed of two pentamers of five dimers.

The catalysed reaction is GTP + H2O = 7,8-dihydroneopterin 3'-triphosphate + formate + H(+). It functions in the pathway cofactor biosynthesis; 7,8-dihydroneopterin triphosphate biosynthesis; 7,8-dihydroneopterin triphosphate from GTP: step 1/1. In Aeromonas hydrophila subsp. hydrophila (strain ATCC 7966 / DSM 30187 / BCRC 13018 / CCUG 14551 / JCM 1027 / KCTC 2358 / NCIMB 9240 / NCTC 8049), this protein is GTP cyclohydrolase 1.